The following is a 139-amino-acid chain: Large ribosomal subunit protein uL16 (139 aa).

Belongs to the universal ribosomal protein uL16 family. As to quaternary structure, part of the 50S ribosomal subunit.

Functionally, binds 23S rRNA and is also seen to make contacts with the A and possibly P site tRNAs. In Protochlamydia amoebophila (strain UWE25), this protein is Large ribosomal subunit protein uL16.